The primary structure comprises 110 residues: Iron-sulfur cluster assembly protein CyaY (110 aa).

This sequence belongs to the frataxin family.

Its function is as follows. Involved in iron-sulfur (Fe-S) cluster assembly. May act as a regulator of Fe-S biogenesis. In Variovorax paradoxus (strain S110), this protein is Iron-sulfur cluster assembly protein CyaY.